Consider the following 124-residue polypeptide: Ribonuclease pancreatic (124 aa).

Substrate contacts are provided by Lys-7 and Arg-10. His-12 acts as the Proton acceptor in catalysis. 4 cysteine pairs are disulfide-bonded: Cys-26–Cys-84, Cys-40–Cys-95, Cys-58–Cys-110, and Cys-65–Cys-72. N-linked (GlcNAc...) asparagine; partial glycosylation is present at Asn-34. Substrate contacts are provided by residues 41–45, Lys-66, and Arg-85; that span reads KPVBT. The active-site Proton donor is the His-119.

The protein belongs to the pancreatic ribonuclease family. As to quaternary structure, monomer. Interacts with and forms tight 1:1 complexes with RNH1. Dimerization of two such complexes may occur. Interaction with RNH1 inhibits this protein. In terms of tissue distribution, pancreas.

It localises to the secreted. It carries out the reaction an [RNA] containing cytidine + H2O = an [RNA]-3'-cytidine-3'-phosphate + a 5'-hydroxy-ribonucleotide-3'-[RNA].. It catalyses the reaction an [RNA] containing uridine + H2O = an [RNA]-3'-uridine-3'-phosphate + a 5'-hydroxy-ribonucleotide-3'-[RNA].. Its function is as follows. Endonuclease that catalyzes the cleavage of RNA on the 3' side of pyrimidine nucleotides. Acts on single-stranded and double-stranded RNA. The polypeptide is Ribonuclease pancreatic (RNASE1) (Damaliscus korrigum (Topi)).